The primary structure comprises 518 residues: MSDYLLQMNGIVKSFGGVKALNGIDITVKPGECVGLCGENGAGKSTLMKVLSAVYPYGTWEGEILWDGQPLKAQSISETEAAGIVIIHQELTLVPDLSVAENIFMGHELTLPGGRMNYPAMMHRAESLMRELKVPDMNVALPVSQYGGGYQQLVEIAKALNKKARLLILDEPSSALTRSEIEVLLDIIHDLKAKGVACVYISHKLDEVAAVCDTVSVIRDGKHIATTAMADMDIPKIITQMVGREMSNLYPTEPHDVGEVIFEARHITCYDVDNPRRKRVDDVSFLLRRGEILGIAGLVGAGRTELVSALFGAYPGRYSGEVWLNGQAIDTRTPLKSIRAGVCMVPEDRKRQGIIPDLGVGQNITLAVLDSYSNMTRIDAEAELGSIDREISRMHLKTASPFLPITSLSGGNQQKAVLAKMLLTRPRVLILDEPTRGVDVGAKYEIYKLMGALAAEGVSIIMVSSELAEVLGVSDRVLVIGDGQLRGDFINHDLTQEQVLAAALSHSDAPHNNARKTA.

2 ABC transporter domains span residues 6–245 and 262–507; these read LQMN…VGRE and FEAR…LSHS. 38 to 45 provides a ligand contact to ATP; sequence GENGAGKS.

The protein belongs to the ABC transporter superfamily. Xylose importer (TC 3.A.1.2.4) family. The complex is composed of two ATP-binding proteins (XylG), two transmembrane proteins (XylH) and a solute-binding protein (XylF).

It is found in the cell inner membrane. It catalyses the reaction D-xylose(out) + ATP + H2O = D-xylose(in) + ADP + phosphate + H(+). Functionally, part of the ABC transporter complex XylFGH involved in xylose import. Responsible for energy coupling to the transport system. The chain is Xylose import ATP-binding protein XylG from Pseudomonas syringae pv. syringae (strain B728a).